Here is a 271-residue protein sequence, read N- to C-terminus: Indole-3-glycerol phosphate synthase (271 aa).

Belongs to the TrpC family.

The catalysed reaction is 1-(2-carboxyphenylamino)-1-deoxy-D-ribulose 5-phosphate + H(+) = (1S,2R)-1-C-(indol-3-yl)glycerol 3-phosphate + CO2 + H2O. It functions in the pathway amino-acid biosynthesis; L-tryptophan biosynthesis; L-tryptophan from chorismate: step 4/5. The polypeptide is Indole-3-glycerol phosphate synthase (Lachnoclostridium phytofermentans (strain ATCC 700394 / DSM 18823 / ISDg) (Clostridium phytofermentans)).